The chain runs to 188 residues: Acireductone dioxygenase (188 aa).

His97, His99, Glu103, and His141 together coordinate Fe(2+). The Ni(2+) site is built by His97, His99, Glu103, and His141.

Belongs to the acireductone dioxygenase (ARD) family. As to quaternary structure, monomer. The cofactor is Fe(2+). Ni(2+) is required as a cofactor.

It catalyses the reaction 1,2-dihydroxy-5-(methylsulfanyl)pent-1-en-3-one + O2 = 3-(methylsulfanyl)propanoate + CO + formate + 2 H(+). The catalysed reaction is 1,2-dihydroxy-5-(methylsulfanyl)pent-1-en-3-one + O2 = 4-methylsulfanyl-2-oxobutanoate + formate + 2 H(+). It functions in the pathway amino-acid biosynthesis; L-methionine biosynthesis via salvage pathway; L-methionine from S-methyl-5-thio-alpha-D-ribose 1-phosphate: step 5/6. Functionally, catalyzes 2 different reactions between oxygen and the acireductone 1,2-dihydroxy-3-keto-5-methylthiopentene (DHK-MTPene) depending upon the metal bound in the active site. Fe-containing acireductone dioxygenase (Fe-ARD) produces formate and 2-keto-4-methylthiobutyrate (KMTB), the alpha-ketoacid precursor of methionine in the methionine recycle pathway. Ni-containing acireductone dioxygenase (Ni-ARD) produces methylthiopropionate, carbon monoxide and formate, and does not lie on the methionine recycle pathway. This is Acireductone dioxygenase from Xanthomonas oryzae pv. oryzae (strain MAFF 311018).